An 849-amino-acid polypeptide reads, in one-letter code: Glycogen phosphorylase (849 aa).

The residue at position 679 (Lys679) is an N6-(pyridoxal phosphate)lysine.

Belongs to the glycogen phosphorylase family. Pyridoxal 5'-phosphate serves as cofactor.

The catalysed reaction is [(1-&gt;4)-alpha-D-glucosyl](n) + phosphate = [(1-&gt;4)-alpha-D-glucosyl](n-1) + alpha-D-glucose 1-phosphate. Its function is as follows. Phosphorylase is an important allosteric enzyme in carbohydrate metabolism. Enzymes from different sources differ in their regulatory mechanisms and in their natural substrates. However, all known phosphorylases share catalytic and structural properties. The chain is Glycogen phosphorylase (glgP) from Synechocystis sp. (strain ATCC 27184 / PCC 6803 / Kazusa).